We begin with the raw amino-acid sequence, 319 residues long: Cobalamin biosynthesis protein CbiB (319 aa).

Helical transmembrane passes span 56-76, 82-102, 153-173, and 296-316; these read VMWV…LALA, WFGW…RSLA, VDGI…LAMA, and LMWV…CGLS.

This sequence belongs to the CobD/CbiB family.

The protein resides in the cell membrane. It functions in the pathway cofactor biosynthesis; adenosylcobalamin biosynthesis. In terms of biological role, converts cobyric acid to cobinamide by the addition of aminopropanol on the F carboxylic group. However, the true cosubstrate could be (R)-1-amino-2-propanol O-2-phosphate, leading to cobinamide phosphate. The chain is Cobalamin biosynthesis protein CbiB from Salmonella paratyphi A (strain ATCC 9150 / SARB42).